The chain runs to 81 residues: Toxin MIT1 (81 aa).

Intrachain disulfides connect Cys7-Cys19, Cys13-Cys31, Cys18-Cys59, Cys41-Cys67, and Cys61-Cys77.

The protein belongs to the AVIT (prokineticin) family. In terms of tissue distribution, expressed by the venom gland.

The protein localises to the secreted. Potent agonist for both PKR1/PROKR1 and PKR2/PROKR2. Potently contracts gastrointestinal (GI) smooth muscle. The sequence is that of Toxin MIT1 from Dendroaspis polylepis polylepis (Black mamba).